We begin with the raw amino-acid sequence, 313 residues long: Small ribosomal subunit biogenesis GTPase RsgA (313 aa).

Positions 82 to 235 (REKLIAANAT…IIDSPGIQQF (154 aa)) constitute a CP-type G domain. Residues 127–130 (NKTD) and 177–185 (GQSGMGKST) contribute to the GTP site. The Zn(2+) site is built by Cys259, Cys264, His266, and Cys272.

This sequence belongs to the TRAFAC class YlqF/YawG GTPase family. RsgA subfamily. In terms of assembly, monomer. Associates with 30S ribosomal subunit, binds 16S rRNA. Requires Zn(2+) as cofactor.

Its subcellular location is the cytoplasm. Its function is as follows. One of several proteins that assist in the late maturation steps of the functional core of the 30S ribosomal subunit. Helps release RbfA from mature subunits. May play a role in the assembly of ribosomal proteins into the subunit. Circularly permuted GTPase that catalyzes slow GTP hydrolysis, GTPase activity is stimulated by the 30S ribosomal subunit. The protein is Small ribosomal subunit biogenesis GTPase RsgA of Nitrosospira multiformis (strain ATCC 25196 / NCIMB 11849 / C 71).